A 196-amino-acid polypeptide reads, in one-letter code: Small ribosomal subunit protein uS4c (196 aa).

One can recognise an S4 RNA-binding domain in the interval Met89–Asn150.

It belongs to the universal ribosomal protein uS4 family. In terms of assembly, part of the 30S ribosomal subunit. Contacts protein S5. The interaction surface between S4 and S5 is involved in control of translational fidelity.

Its subcellular location is the plastid. The protein resides in the chloroplast. Functionally, one of the primary rRNA binding proteins, it binds directly to 16S rRNA where it nucleates assembly of the body of the 30S subunit. In terms of biological role, with S5 and S12 plays an important role in translational accuracy. This chain is Small ribosomal subunit protein uS4c (rps4), found in Eleusine indica (Goosegrass).